The primary structure comprises 302 residues: Putative T-box protein 34 (302 aa).

The segment at residues Ile5–Gln180 is a DNA-binding region (T-box).

The protein localises to the nucleus. This chain is Putative T-box protein 34 (tbx-34), found in Caenorhabditis elegans.